The following is a 541-amino-acid chain: Chaperonin GroEL (541 aa).

Residues 29 to 32 (TLGP), 86 to 90 (DGTTT), Gly-413, 476 to 478 (NAA), and Asp-492 each bind ATP.

This sequence belongs to the chaperonin (HSP60) family. As to quaternary structure, forms a cylinder of 14 subunits composed of two heptameric rings stacked back-to-back. Interacts with the co-chaperonin GroES.

It is found in the cytoplasm. The enzyme catalyses ATP + H2O + a folded polypeptide = ADP + phosphate + an unfolded polypeptide.. Together with its co-chaperonin GroES, plays an essential role in assisting protein folding. The GroEL-GroES system forms a nano-cage that allows encapsulation of the non-native substrate proteins and provides a physical environment optimized to promote and accelerate protein folding. In Streptococcus equi subsp. zooepidemicus (strain H70), this protein is Chaperonin GroEL.